The chain runs to 430 residues: Terminal nucleotidyltransferase 5B (430 aa).

The interval 1–46 (MMPSESETESRDRAAAQVGTAAAAAVAKAAPAGGGPDPEASSASLG) is disordered. Over residues 15 to 44 (AAQVGTAAAAAVAKAAPAGGGPDPEASSAS) the composition is skewed to low complexity.

It belongs to the TENT family.

The protein localises to the cytoplasm. Its subcellular location is the nucleus. The catalysed reaction is RNA(n) + ATP = RNA(n)-3'-adenine ribonucleotide + diphosphate. Its function is as follows. Catalyzes the transfer of one adenosine molecule from an ATP to an mRNA poly(A) tail bearing a 3'-OH terminal group in an ATP hydrolysis-dependent manner. May be involved in maintaining the translation efficiency of at least some genes through preventing degradation of their mRNAs. Prefers RNA molecules that are adenosine-rich close to 3'-end. In addition, may inhibit cell proliferation and cell cycle progression through ubiquitination of beta-catenin/CTNNB1. In Bos taurus (Bovine), this protein is Terminal nucleotidyltransferase 5B.